The primary structure comprises 473 residues: Peptidoglycan DL-endopeptidase CwlO (473 aa).

The N-terminal stretch at 1–30 (MRKSLITLGLASVIGTSSFLIPFTSKTASA) is a signal peptide. Disordered stretches follow at residues 31–52 (ETLD…SSIE), 79–98 (ALDT…KTKE), and 237–337 (EASE…GTVI). Over residues 33–44 (LDEKKQKIESKQ) the composition is skewed to basic and acidic residues. Residues 241 to 250 (LANQKANTEA) are compositionally biased toward polar residues. 2 stretches are compositionally biased toward basic and acidic residues: residues 251–260 (EQARIKKEQE) and 267–277 (KKQEEAQKASD). Residues 291–337 (SSKASSSDDSSDNSSDNSSNGSSNSSSNGSSSKKSSGSNSNSGGTVI) show a composition bias toward low complexity. A NlpC/P60 domain is found at 340 to 471 (SGGIEGAISV…AAFKGVVRRV (132 aa)). Residue Cys-377 is the Nucleophile of the active site. The Proton acceptor role is filled by His-431. The active site involves Asn-443.

It belongs to the peptidase C40 family. In terms of processing, identified in the extracellular proteome as a number of processing products of about 50 and 30 kDa.

It localises to the secreted. The protein resides in the cell wall. Its activity is regulated as follows. Detected in exponentially growing cells, the 50 and 30 kDa processing products disappear upon entry into stationary phase with the concomitant appearance of a 20 kDa products. The 50 kDa form persists in the absence of extracellular proteases. In terms of biological role, the C-terminal part of CwlO shows a cell wall hydrolytic DL-endopeptidase activity. The protein is Peptidoglycan DL-endopeptidase CwlO (cwlO) of Bacillus subtilis (strain 168).